We begin with the raw amino-acid sequence, 208 residues long: Small ribosomal subunit protein uS4 (208 aa).

Residues 98–161 (RRLDNTIYRL…RQSPIILEAQ (64 aa)) form the S4 RNA-binding domain.

This sequence belongs to the universal ribosomal protein uS4 family. As to quaternary structure, part of the 30S ribosomal subunit. Contacts protein S5. The interaction surface between S4 and S5 is involved in control of translational fidelity.

In terms of biological role, one of the primary rRNA binding proteins, it binds directly to 16S rRNA where it nucleates assembly of the body of the 30S subunit. With S5 and S12 plays an important role in translational accuracy. This chain is Small ribosomal subunit protein uS4, found in Solidesulfovibrio magneticus (strain ATCC 700980 / DSM 13731 / RS-1) (Desulfovibrio magneticus).